The sequence spans 473 residues: Glutamate--tRNA ligase (473 aa).

The short motif at 9-19 (PSPTGYLHVGG) is the 'HIGH' region element. The Zn(2+) site is built by Cys-98, Cys-100, Cys-125, and Asp-127. The short motif at 237–241 (KLSKR) is the 'KMSKS' region element. Lys-240 serves as a coordination point for ATP.

The protein belongs to the class-I aminoacyl-tRNA synthetase family. Glutamate--tRNA ligase type 1 subfamily. In terms of assembly, monomer. Requires Zn(2+) as cofactor.

The protein resides in the cytoplasm. The catalysed reaction is tRNA(Glu) + L-glutamate + ATP = L-glutamyl-tRNA(Glu) + AMP + diphosphate. Functionally, catalyzes the attachment of glutamate to tRNA(Glu) in a two-step reaction: glutamate is first activated by ATP to form Glu-AMP and then transferred to the acceptor end of tRNA(Glu). This Sodalis glossinidius (strain morsitans) protein is Glutamate--tRNA ligase.